Reading from the N-terminus, the 62-residue chain is Sec-independent protein translocase protein TatA (62 aa).

Residues 10–32 (LLIILIIVIAIFGAGKLAGLGGA) traverse the membrane as a helical segment.

This sequence belongs to the TatA/E family. As to quaternary structure, forms a complex with TatC.

The protein localises to the cell membrane. Part of the twin-arginine translocation (Tat) system that transports large folded proteins containing a characteristic twin-arginine motif in their signal peptide across membranes. TatA could form the protein-conducting channel of the Tat system. This chain is Sec-independent protein translocase protein TatA, found in Chloroflexus aurantiacus (strain ATCC 29366 / DSM 635 / J-10-fl).